The sequence spans 268 residues: Putative hydro-lyase ABAYE2440 (268 aa).

Belongs to the D-glutamate cyclase family.

This is Putative hydro-lyase ABAYE2440 from Acinetobacter baumannii (strain AYE).